The following is a 66-amino-acid chain: Large ribosomal subunit protein uL29 (66 aa).

Belongs to the universal ribosomal protein uL29 family.

This Thermotoga sp. (strain RQ2) protein is Large ribosomal subunit protein uL29.